Consider the following 469-residue polypeptide: Glutamine synthetase (469 aa).

Positions 16–100 (EGVQYVDLRF…MICDIYDPVT (85 aa)) constitute a GS beta-grasp domain. One can recognise a GS catalytic domain in the interval 108–469 (TRYIAQKAEQ…PKEFELYWDI (362 aa)). Mg(2+)-binding residues include E133 and E135. Residue E207 participates in ATP binding. 2 residues coordinate Mg(2+): E212 and E220. L-glutamate-binding positions include 264–265 (NG) and G265. H269 is a binding site for Mg(2+). Residues 271–273 (HFS) and S273 each bind ATP. The L-glutamate site is built by R321, E327, and R339. 3 residues coordinate ATP: R339, R344, and K353. A Mg(2+)-binding site is contributed by E358. L-glutamate is bound at residue R360. Y398 is subject to O-AMP-tyrosine.

This sequence belongs to the glutamine synthetase family. As to quaternary structure, oligomer of 12 subunits arranged in the form of two hexagons. Requires Mg(2+) as cofactor.

The protein resides in the cytoplasm. It catalyses the reaction L-glutamate + NH4(+) + ATP = L-glutamine + ADP + phosphate + H(+). Its activity is regulated as follows. The activity of this enzyme could be controlled by adenylation under conditions of abundant glutamine. In terms of biological role, catalyzes the ATP-dependent biosynthesis of glutamine from glutamate and ammonia. The sequence is that of Glutamine synthetase from Aquifex aeolicus (strain VF5).